The following is a 256-amino-acid chain: MNNAIFPNKFKVALAAQQVQIGCWSALASPITTEVLGLAGFDWLVLDGEHAPNDVTTLIPQLMALKGSASAPVVRVPTNEPVIIKRMLDIGFYNFLIPFVETQEEAARAVASTRYPPEGIRGVSVSHRANMFGTVPDYFAQSNKNITIIVQIESQLGVDNVDAIAATEGVDGIFVGPSDLAAAMGHLGNASHPDVQQTIQHIFARAKAHGKPCGILAPVEADARRYLEWGATFVAVGSDLGVFRAGTQKLADTFKK.

Residue His-50 is the Proton acceptor of the active site. Gln-151 serves as a coordination point for substrate. A Mg(2+)-binding site is contributed by Glu-153. Residues Ser-178 and Asp-179 each coordinate substrate. Position 179 (Asp-179) interacts with Mg(2+).

The protein belongs to the HpcH/HpaI aldolase family. KDGluc aldolase subfamily. Homohexamer; trimer of dimers. It depends on Mg(2+) as a cofactor.

It carries out the reaction 5-dehydro-4-deoxy-D-glucarate = 2-hydroxy-3-oxopropanoate + pyruvate. It catalyses the reaction 2-dehydro-3-deoxy-D-glucarate = 2-hydroxy-3-oxopropanoate + pyruvate. It functions in the pathway carbohydrate acid metabolism; galactarate degradation; D-glycerate from galactarate: step 2/3. Catalyzes the reversible retro-aldol cleavage of both 5-keto-4-deoxy-D-glucarate and 2-keto-3-deoxy-D-glucarate to pyruvate and tartronic semialdehyde. This is 5-keto-4-deoxy-D-glucarate aldolase from Salmonella arizonae (strain ATCC BAA-731 / CDC346-86 / RSK2980).